A 429-amino-acid chain; its full sequence is Saccharopine dehydrogenase-like oxidoreductase (429 aa).

At Ala2 the chain carries N-acetylalanine. Phosphoserine occurs at positions 209, 215, and 217.

It belongs to the saccharopine dehydrogenase family.

In Rattus norvegicus (Rat), this protein is Saccharopine dehydrogenase-like oxidoreductase (Sccpdh).